Here is a 370-residue protein sequence, read N- to C-terminus: Luciferin sulfotransferase (370 aa).

90 to 95 contributes to the 3'-phosphoadenylyl sulfate binding site; the sequence is KAGTTW. The Proton acceptor role is filled by His-165. 3'-phosphoadenylyl sulfate contacts are provided by residues Arg-189, Ser-197, Tyr-250, 284 to 289, and 316 to 320; these read LSFESM and FMRSG.

The protein belongs to the sulfotransferase 1 family.

It catalyses the reaction firefly D-luciferin + 3'-phosphoadenylyl sulfate = firefly D-sulfoluciferin + adenosine 3',5'-bisphosphate + H(+). The catalysed reaction is firefly L-luciferin + 3'-phosphoadenylyl sulfate = firefly L-sulfoluciferin + adenosine 3',5'-bisphosphate + H(+). Its activity is regulated as follows. Sulfoluciferin formation is inhibited by the product adenosine 3',5'-bisphosphate. In terms of biological role, catalyzes the production of firefly sulfoluciferin from luciferin using the sulfo-donor 3'-phosphoadenylyl sulfate (PAPS). Is also able to catalyze the reverse reaction, i.e. the adenosine 3',5'-bisphosphate-dependent desulfonation of sulfoluciferin. Can use either D- or L-luciferin stereoisomer as substrate. Sulfoluciferin, which is not a substrate of P.pyralis luciferase, likely serves as a luciferin storage form in fireflies. The sequence is that of Luciferin sulfotransferase from Photinus pyralis (Common eastern firefly).